The chain runs to 207 residues: MTAIKELKAVARARGGKGAARAERRAGRVPAVIYGEKQEPVTISLGHKEITRIIYAGHFLTTLFEIDVDGVKHRVIPRDYQLDPVKDLPLHVDFLRVSQGASVTVEVPVHFENQDKAPGLKSGGTLNVVAHAVALECPAEAIPDHVVADLTGLEIGDSLHLSKVKLPAGVSSAVTGDDTLATIVAPSGLKEAEADEAAAAAAAAAKA.

It belongs to the bacterial ribosomal protein bL25 family. CTC subfamily. As to quaternary structure, part of the 50S ribosomal subunit; part of the 5S rRNA/L5/L18/L25 subcomplex. Contacts the 5S rRNA. Binds to the 5S rRNA independently of L5 and L18.

This is one of the proteins that binds to the 5S RNA in the ribosome where it forms part of the central protuberance. This Azorhizobium caulinodans (strain ATCC 43989 / DSM 5975 / JCM 20966 / LMG 6465 / NBRC 14845 / NCIMB 13405 / ORS 571) protein is Large ribosomal subunit protein bL25.